Here is a 307-residue protein sequence, read N- to C-terminus: Pantothenate kinase (307 aa).

90–97 (GSVAVGKS) lines the ATP pocket.

It belongs to the prokaryotic pantothenate kinase family.

Its subcellular location is the cytoplasm. It catalyses the reaction (R)-pantothenate + ATP = (R)-4'-phosphopantothenate + ADP + H(+). It functions in the pathway cofactor biosynthesis; coenzyme A biosynthesis; CoA from (R)-pantothenate: step 1/5. The polypeptide is Pantothenate kinase (Levilactobacillus brevis (strain ATCC 367 / BCRC 12310 / CIP 105137 / JCM 1170 / LMG 11437 / NCIMB 947 / NCTC 947) (Lactobacillus brevis)).